A 286-amino-acid polypeptide reads, in one-letter code: 4-diphosphocytidyl-2-C-methyl-D-erythritol kinase (286 aa).

The active site involves Lys11. An ATP-binding site is contributed by 94 to 104; it reads PMGGGIGGGSS. Residue Asp136 is part of the active site.

It belongs to the GHMP kinase family. IspE subfamily.

The catalysed reaction is 4-CDP-2-C-methyl-D-erythritol + ATP = 4-CDP-2-C-methyl-D-erythritol 2-phosphate + ADP + H(+). It participates in isoprenoid biosynthesis; isopentenyl diphosphate biosynthesis via DXP pathway; isopentenyl diphosphate from 1-deoxy-D-xylulose 5-phosphate: step 3/6. Catalyzes the phosphorylation of the position 2 hydroxy group of 4-diphosphocytidyl-2C-methyl-D-erythritol. This is 4-diphosphocytidyl-2-C-methyl-D-erythritol kinase from Pseudomonas entomophila (strain L48).